The chain runs to 307 residues: Protein pid-3 (307 aa).

As to quaternary structure, component of the pid-1 variant of the PETISCO complex (also called the pid-3, erh-2, tofu-6, and ife-3 small RNA complex) containing at least pid-1, tofu-6, ife-3, pid-3, and erh-2, which is required for the biogenesis of a class of 21 nucleotide PIWI-interacting RNAs (piRNAs) that possess a uracil residue at the 5'-end (also called 21U-RNAs). Within the complex interacts with pid-1; the interaction is direct. Component of the tost-1 variant of the PETISCO complex (also called the pid-3, erh-2, tofu-6, and ife-3 small RNA complex) containing at least tost-1, tofu-6, ife-3, pid-3, and erh-2, which plays an essential role in embryogenesis. Within the complex interacts with tost-1. Within the pid-1 and tost-1 variants of the PETISCO complexes interacts with tofu-6 (via the RRM domain) and erh-2. In contrast to the pid-1 variant of the PETISCO complex, the tost-1 variant of the PETISCO complex plays a minor role in the biogenesis of 21U-RNAs. As to expression, expressed in the germline (at protein level).

The protein localises to the cytoplasm. Its subcellular location is the perinuclear region. The protein resides in the nucleus. Component of the pid-1 and tost-1 variants of the PETISCO complexes, which have roles in the biogenesis of a class of 21 nucleotide PIWI-interacting RNAs (piRNAs) that possess a uracil residue at the 5'-end (also called 21U-RNAs) and embryogenesis, respectively. Within the pid-1 variant of the PETISCO complex may stabilize 21U-RNA precursor molecules. Promotes the biogenesis of 21U-RNAs. Required for chromosome segregation and cell division in early embryos. This is Protein pid-3 from Caenorhabditis elegans.